The primary structure comprises 320 residues: Dual oxidase maturation factor 2 (320 aa).

Residues 22–42 traverse the membrane as a helical segment; it reads VPLLIVILVFLSLAASFLFIL. Residues 43–51 are Cytoplasmic-facing; that stretch reads PGIRGHSRW. The helical transmembrane segment at 52–72 threads the bilayer; it reads FWLVRVLLSLFIGAEIVAVHF. Over 73-183 the chain is Extracellular; the sequence is SGDWFVGRVW…HLAGHYAAAT (111 aa). Asn84, Asn109, and Asn121 each carry an N-linked (GlcNAc...) asparagine glycan. A helical transmembrane segment spans residues 184–204; the sequence is LWVAFCFWIIANALLSMPAPL. Over 205 to 206 the chain is Cytoplasmic; it reads YG. Residues 207–227 traverse the membrane as a helical segment; it reads GLALLTTGAFTLFGVFAFASI. Residues 228-249 are Extracellular-facing; it reads SSVPLCHFRLGSAVLTPYYGAS. The helical transmembrane segment at 250–270 threads the bilayer; it reads FWLTLATGILSLLLGGAVVIL. Residues 271-320 lie on the Cytoplasmic side of the membrane; it reads HYTRPSALRSFLDLSVKDCSNQAKGNSPLTLNNPQHEQLKSPDLNITTLL.

Belongs to the DUOXA family. Heterodimer with DUXA2; disulfide-linked. Interacts with CSNK1G2. In terms of processing, N-glycosylated.

The protein resides in the endoplasmic reticulum membrane. In terms of biological role, required for the maturation and the transport from the endoplasmic reticulum to the plasma membrane of functional DUOX2. May play a role in thyroid hormone synthesis. The chain is Dual oxidase maturation factor 2 (Duoxa2) from Mus musculus (Mouse).